The chain runs to 384 residues: tRNA-specific 2-thiouridylase MnmA (384 aa).

ATP-binding positions include 21-28 (GMSGGVDS) and M47. The tract at residues 107 to 109 (NPD) is interaction with target base in tRNA. C112 serves as the catalytic Nucleophile. A disulfide bridge links C112 with C208. G136 lines the ATP pocket. The interval 158-160 (KDQ) is interaction with tRNA. The Cysteine persulfide intermediate role is filled by C208. Residues 320-321 (RY) form an interaction with tRNA region.

It belongs to the MnmA/TRMU family.

It localises to the cytoplasm. The catalysed reaction is S-sulfanyl-L-cysteinyl-[protein] + uridine(34) in tRNA + AH2 + ATP = 2-thiouridine(34) in tRNA + L-cysteinyl-[protein] + A + AMP + diphosphate + H(+). In terms of biological role, catalyzes the 2-thiolation of uridine at the wobble position (U34) of tRNA, leading to the formation of s(2)U34. The sequence is that of tRNA-specific 2-thiouridylase MnmA from Chromohalobacter salexigens (strain ATCC BAA-138 / DSM 3043 / CIP 106854 / NCIMB 13768 / 1H11).